The sequence spans 131 residues: Large ribosomal subunit protein bL19 (131 aa).

This sequence belongs to the bacterial ribosomal protein bL19 family.

Its function is as follows. This protein is located at the 30S-50S ribosomal subunit interface and may play a role in the structure and function of the aminoacyl-tRNA binding site. The protein is Large ribosomal subunit protein bL19 of Polynucleobacter necessarius subsp. necessarius (strain STIR1).